Reading from the N-terminus, the 88-residue chain is UPF0213 protein EF_2693 (88 aa).

Residues 5-82 form the GIY-YIG domain; that stretch reads KSHYFYVLLC…KKLTRKQKEQ (78 aa).

It belongs to the UPF0213 family.

The protein is UPF0213 protein EF_2693 of Enterococcus faecalis (strain ATCC 700802 / V583).